A 1215-amino-acid polypeptide reads, in one-letter code: DNA-directed RNA polymerase subunit beta' (1215 aa).

4 residues coordinate Zn(2+): Cys-60, Cys-62, Cys-75, and Cys-78. Residues Asp-450, Asp-452, and Asp-454 each coordinate Mg(2+). Cys-819, Cys-893, Cys-900, and Cys-903 together coordinate Zn(2+).

The protein belongs to the RNA polymerase beta' chain family. In terms of assembly, the RNAP catalytic core consists of 2 alpha, 1 beta, 1 beta' and 1 omega subunit. When a sigma factor is associated with the core the holoenzyme is formed, which can initiate transcription. Mg(2+) is required as a cofactor. The cofactor is Zn(2+).

The enzyme catalyses RNA(n) + a ribonucleoside 5'-triphosphate = RNA(n+1) + diphosphate. DNA-dependent RNA polymerase catalyzes the transcription of DNA into RNA using the four ribonucleoside triphosphates as substrates. The protein is DNA-directed RNA polymerase subunit beta' of Levilactobacillus brevis (strain ATCC 367 / BCRC 12310 / CIP 105137 / JCM 1170 / LMG 11437 / NCIMB 947 / NCTC 947) (Lactobacillus brevis).